The chain runs to 296 residues: Ribosomal RNA small subunit methyltransferase H (296 aa).

S-adenosyl-L-methionine-binding positions include 30-32 (GGH), D49, F76, D97, and Q104.

The protein belongs to the methyltransferase superfamily. RsmH family.

It is found in the cytoplasm. It carries out the reaction cytidine(1402) in 16S rRNA + S-adenosyl-L-methionine = N(4)-methylcytidine(1402) in 16S rRNA + S-adenosyl-L-homocysteine + H(+). Functionally, specifically methylates the N4 position of cytidine in position 1402 (C1402) of 16S rRNA. This is Ribosomal RNA small subunit methyltransferase H from Mesomycoplasma hyopneumoniae (strain 232) (Mycoplasma hyopneumoniae).